An 863-amino-acid polypeptide reads, in one-letter code: DNA mismatch repair protein MutS (863 aa).

An ATP-binding site is contributed by glycine 617–serine 624.

This sequence belongs to the DNA mismatch repair MutS family.

Functionally, this protein is involved in the repair of mismatches in DNA. It is possible that it carries out the mismatch recognition step. This protein has a weak ATPase activity. This Pseudomonas fluorescens (strain SBW25) protein is DNA mismatch repair protein MutS.